A 201-amino-acid chain; its full sequence is Recombination protein RecR (201 aa).

A C4-type zinc finger spans residues 59 to 74; sequence CEICGNMDTENMCRIC. A Toprim domain is found at 82–177; the sequence is SIIAIVETVA…KISRLASGIP (96 aa).

This sequence belongs to the RecR family.

In terms of biological role, may play a role in DNA repair. It seems to be involved in an RecBC-independent recombinational process of DNA repair. It may act with RecF and RecO. This is Recombination protein RecR from Rickettsia africae (strain ESF-5).